We begin with the raw amino-acid sequence, 160 residues long: Heme transporter hrg-5 (160 aa).

Residues 21–41 (IALTILDILIGFSNILSYAIQ) traverse the membrane as a helical segment. Asn44 carries an N-linked (GlcNAc...) asparagine glycan. Transmembrane regions (helical) follow at residues 47 to 67 (ALTL…MFLA), 89 to 109 (ITLG…AGVT), and 123 to 142 (FTGL…ALLA). An N-linked (GlcNAc...) asparagine glycan is attached at Asn144.

The protein belongs to the HRG family.

Its subcellular location is the membrane. Heme transporter. In Caenorhabditis elegans, this protein is Heme transporter hrg-5 (hrg-5).